We begin with the raw amino-acid sequence, 394 residues long: Probable fatty acid methyltransferase (394 aa).

Residues 128–129 (YS), 163–171 (LLDVGCGWG), and 189–194 (TLSKEQ) contribute to the S-adenosyl-L-methionine site. The active site involves cysteine 358.

The protein belongs to the CFA/CMAS family.

The chain is Probable fatty acid methyltransferase from Pseudomonas putida (Arthrobacter siderocapsulatus).